The primary structure comprises 651 residues: Acetyl-coenzyme A synthetase (651 aa).

Residues 191-194 (RGGK), T311, and N335 contribute to the CoA site. ATP is bound by residues 387–389 (GEP), 411–416 (DTWWQT), D500, and R515. Residue S523 participates in CoA binding. ATP is bound at residue R526. Residues V537, H539, and V542 each contribute to the Mg(2+) site. Residue R584 coordinates CoA. Position 609 is an N6-acetyllysine (K609).

The protein belongs to the ATP-dependent AMP-binding enzyme family. Mg(2+) serves as cofactor. Post-translationally, acetylated. Deacetylation by the SIR2-homolog deacetylase activates the enzyme.

It carries out the reaction acetate + ATP + CoA = acetyl-CoA + AMP + diphosphate. Its function is as follows. Catalyzes the conversion of acetate into acetyl-CoA (AcCoA), an essential intermediate at the junction of anabolic and catabolic pathways. AcsA undergoes a two-step reaction. In the first half reaction, AcsA combines acetate with ATP to form acetyl-adenylate (AcAMP) intermediate. In the second half reaction, it can then transfer the acetyl group from AcAMP to the sulfhydryl group of CoA, forming the product AcCoA. The sequence is that of Acetyl-coenzyme A synthetase from Stutzerimonas stutzeri (strain A1501) (Pseudomonas stutzeri).